Reading from the N-terminus, the 259-residue chain is Imidazole glycerol phosphate synthase subunit HisF (259 aa).

Catalysis depends on residues Asp11 and Asp130.

It belongs to the HisA/HisF family. Heterodimer of HisH and HisF.

It localises to the cytoplasm. The catalysed reaction is 5-[(5-phospho-1-deoxy-D-ribulos-1-ylimino)methylamino]-1-(5-phospho-beta-D-ribosyl)imidazole-4-carboxamide + L-glutamine = D-erythro-1-(imidazol-4-yl)glycerol 3-phosphate + 5-amino-1-(5-phospho-beta-D-ribosyl)imidazole-4-carboxamide + L-glutamate + H(+). The protein operates within amino-acid biosynthesis; L-histidine biosynthesis; L-histidine from 5-phospho-alpha-D-ribose 1-diphosphate: step 5/9. IGPS catalyzes the conversion of PRFAR and glutamine to IGP, AICAR and glutamate. The HisF subunit catalyzes the cyclization activity that produces IGP and AICAR from PRFAR using the ammonia provided by the HisH subunit. In Polaromonas sp. (strain JS666 / ATCC BAA-500), this protein is Imidazole glycerol phosphate synthase subunit HisF.